Consider the following 186-residue polypeptide: Lipid A acyltransferase PagP (186 aa).

A signal peptide spans 1–25; that stretch reads MNVSKYVAIFSFVFIQLISVGKVFA. Active-site residues include histidine 58, aspartate 101, and serine 102.

This sequence belongs to the lipid A palmitoyltransferase family. Homodimer.

Its subcellular location is the cell outer membrane. The catalysed reaction is a lipid A + a 1,2-diacyl-sn-glycero-3-phosphocholine = a hepta-acyl lipid A + a 2-acyl-sn-glycero-3-phosphocholine. It carries out the reaction a lipid IVA + a 1,2-diacyl-sn-glycero-3-phosphocholine = a lipid IVB + a 2-acyl-sn-glycero-3-phosphocholine. The enzyme catalyses a lipid IIA + a 1,2-diacyl-sn-glycero-3-phosphocholine = a lipid IIB + a 2-acyl-sn-glycero-3-phosphocholine. Its function is as follows. Transfers a fatty acid residue from the sn-1 position of a phospholipid to the N-linked hydroxyfatty acid chain on the proximal unit of lipid A or its precursors. In Shigella boydii serotype 4 (strain Sb227), this protein is Lipid A acyltransferase PagP.